The primary structure comprises 187 residues: Probable chemoreceptor glutamine deamidase CheD (187 aa).

A disordered region spans residues 164–187 (APQDVRRPTPPPMPAVASGDVDLF).

Belongs to the CheD family.

The catalysed reaction is L-glutaminyl-[protein] + H2O = L-glutamyl-[protein] + NH4(+). In terms of biological role, probably deamidates glutamine residues to glutamate on methyl-accepting chemotaxis receptors (MCPs), playing an important role in chemotaxis. The protein is Probable chemoreceptor glutamine deamidase CheD of Caulobacter vibrioides (strain ATCC 19089 / CIP 103742 / CB 15) (Caulobacter crescentus).